The sequence spans 381 residues: Zinc finger CCCH domain-containing protein 61 (381 aa).

The disordered stretch occupies residues 1 to 39 (MDVEHHKSGHISRPTVDIPPRKLLSSAKSPSSVSSPLRD). The segment covering 21-37 (RKLLSSAKSPSSVSSPL) has biased composition (low complexity). C3H1-type zinc fingers lie at residues 101-128 (YTGE…HGVF) and 137-159 (YRTE…AHSP).

As to quaternary structure, interacts with MARD1/FLZ9 and RD21A via its CCCH zing finger domains.

It is found in the cytoplasm. Its subcellular location is the stress granule. The protein localises to the P-body. In Arabidopsis thaliana (Mouse-ear cress), this protein is Zinc finger CCCH domain-containing protein 61.